The sequence spans 342 residues: Nicotinate-nucleotide--dimethylbenzimidazole phosphoribosyltransferase (342 aa).

E311 serves as the catalytic Proton acceptor.

This sequence belongs to the CobT family.

The enzyme catalyses 5,6-dimethylbenzimidazole + nicotinate beta-D-ribonucleotide = alpha-ribazole 5'-phosphate + nicotinate + H(+). Its pathway is nucleoside biosynthesis; alpha-ribazole biosynthesis; alpha-ribazole from 5,6-dimethylbenzimidazole: step 1/2. Catalyzes the synthesis of alpha-ribazole-5'-phosphate from nicotinate mononucleotide (NAMN) and 5,6-dimethylbenzimidazole (DMB). This is Nicotinate-nucleotide--dimethylbenzimidazole phosphoribosyltransferase from Shewanella sediminis (strain HAW-EB3).